The sequence spans 428 residues: Adenylosuccinate synthetase (428 aa).

Residues 12 to 18 and 40 to 42 each bind GTP; these read GDEGKGK and GHT. Asp-13 serves as the catalytic Proton acceptor. Residues Asp-13 and Gly-40 each contribute to the Mg(2+) site. IMP-binding positions include 13-16, 38-41, Thr-130, Arg-144, Gln-224, Thr-239, and Arg-303; these read DEGK and NAGH. Residue His-41 is the Proton donor of the active site. 299 to 305 is a substrate binding site; sequence VTTGRSR. GTP is bound by residues Arg-305, 331 to 333, and 413 to 415; these read KID and GVG.

Belongs to the adenylosuccinate synthetase family. Homodimer. It depends on Mg(2+) as a cofactor.

The protein resides in the cytoplasm. The catalysed reaction is IMP + L-aspartate + GTP = N(6)-(1,2-dicarboxyethyl)-AMP + GDP + phosphate + 2 H(+). The protein operates within purine metabolism; AMP biosynthesis via de novo pathway; AMP from IMP: step 1/2. Functionally, plays an important role in the de novo pathway of purine nucleotide biosynthesis. Catalyzes the first committed step in the biosynthesis of AMP from IMP. The chain is Adenylosuccinate synthetase from Clostridium perfringens (strain 13 / Type A).